The primary structure comprises 688 residues: MATASGASDLSGSGAPPPGVGAQAAAAAEEEEREVVRVRVKKCESFLPPEFRSFAVDPQITSLDVLQHILIRAFDLSGKKNFGISYLGRDRLGQEVYLSLLSDWDLSTAFATASKPYLQLRVDIRPSEDSPLLEDWDIISPKDVIGSDVLLAEKRSSLTTAALPFTQSILTQVGRTLSKVQQVLSWSYGEDVKPFKPPLSDAEFHTYLNHEGQLSRPEELRLRIYHGGVEPSLRKVVWRYLLNVYPDGLTGRERMDYMKRKSREYEQLKSEWAQRANPEDLEFIRSTVLKDVLRTDRAHPYYAGPEDGPHLRALHDLLTTYAVTHPQVSYCQGMSDLASPILAVMDHEGHAFVCFCGIMKRLAANFHPDGRAMATKFAHLKLLLRHADPDFYQYLQEAGADDLFFCYRWLLLELKREFAFDDALRMLEVTWSSLPPDPPEHEVELVGPPSQVADAGFGGHRGWPVRQRHMLRPAGGGGSTFEDAVDHLATASQGPGGGGRLLRQASLDGLQQLRDNMGSRRDPLVQLPHPAALISSKSLSEPLLNSPDPLLSSFSHPDSPSSSSPPSTQEASPTGDMAVGSPLMQEVGSPKDPGKSLPPVPPMGLPPPQEFGRGNPFMLFLCLAILLEHRDHIMRNGLDYNELAMHFDRLVRKHHLGRVLRRARALFADYLQSEVWDSEEGAEATAAS.

A disordered region spans residues 1 to 27 (MATASGASDLSGSGAPPPGVGAQAAAA). A Phosphoserine modification is found at Ser-140. Thr-160 is subject to Phosphothreonine. In terms of domain architecture, Rab-GAP TBC spans 228-434 (GVEPSLRKVV…RMLEVTWSSL (207 aa)). Ser-506 bears the Phosphoserine mark. Residues 544-567 (LNSPDPLLSSFSHPDSPSSSSPPS) are compositionally biased toward low complexity. The tract at residues 544-606 (LNSPDPLLSS…LPPVPPMGLP (63 aa)) is disordered. Positions 596–606 (SLPPVPPMGLP) are enriched in pro residues.

As to quaternary structure, interacts (via N-terminus) with MAP1LC3B, GABARAP and GABARAPL2.

Its subcellular location is the cytoplasm. It is found in the cytoplasmic vesicle. It localises to the autophagosome. Acts as a GTPase-activating protein specific for RAB33B. Involved in the regulation of autophagosome maturation, the process in which autophagosomes fuse with endosomes and lysosomes. This chain is TBC1 domain family member 25 (TBC1D25), found in Homo sapiens (Human).